A 435-amino-acid polypeptide reads, in one-letter code: Mitogen-activated protein kinase HOG1 (435 aa).

At Thr2 the chain carries N-acetylthreonine. Positions 23–302 constitute a Protein kinase domain; sequence YNDLNPVGMG…AADALAHPYS (280 aa). ATP contacts are provided by residues 29–37 and Lys52; that span reads VGMGAFGLV. The active-site Proton acceptor is Asp144. The arsenite site is built by Cys156 and Cys161. Thr174 carries the phosphothreonine; by PBS2 modification. The TXY signature appears at 174–176; that stretch reads TGY. Phosphotyrosine; by PBS2 is present on Tyr176. Cys205 serves as a coordination point for arsenite.

Belongs to the protein kinase superfamily. Ser/Thr protein kinase family. MAP kinase subfamily. HOG1 sub-subfamily. As to quaternary structure, interacts with CDC37, HOT1, KIN28, PTP2, PTP3, RBP1, RCK2, RPD3, SIC1, SMP1 and SIN4. Requires Mg(2+) as cofactor. In terms of processing, activated by PBS2-mediated concomitant phosphorylation at Thr-174 and Tyr-176. Post-translationally, dually phosphorylated on Thr-174 and Tyr-176, which activates the enzyme.

The protein localises to the cytoplasm. It is found in the nucleus. The catalysed reaction is L-seryl-[protein] + ATP = O-phospho-L-seryl-[protein] + ADP + H(+). It catalyses the reaction L-threonyl-[protein] + ATP = O-phospho-L-threonyl-[protein] + ADP + H(+). Activated by tyrosine and threonine phosphorylation. Inactivated by dephosphorylation via recruitment of PTC1 to the PBS2-HOG1 complex after adaptation to osmotic stress. PTP2 and PTP3 inactivate HOG1 by dephosphorylating Tyr-176, while the PP2Cs PTC1 and PTC2 or PTC3 dephosphorylate Thr-174 in the activation loop. Proline-directed serine/threonine-protein kinase involved in a signal transduction pathway that is activated by changes in the osmolarity of the extracellular environment. Controls osmotic regulation of transcription via the stress response element (STRE) in promoters of target genes. Upon osmotic shock, associates with the SKO1-SSN6-TUP1 complex, phosphorylates SKO1, and converts it into an activator that subsequently recruits Swi/Snf and SAGA complexes. Activates the SMP1 transcription factor and the RCK2 kinase, both also involved in the regulation of the expression of a subset of osmotic stress-related genes. Phosphorylation of HSL1 by HOG1 leads to a G2 arrest essential for cell survival at high osmolarity. Also mediates cell-cycle arrest in G1 phase by the dual targeting of SIC1. Phosphorylates methyltransferase DOT1 at least on 'Ser-565' and 'Thr-576'. Regulates MFA2 ARE-mediated translation in response to carbon source. Targets RPD3 histone deacetylase to osmoresponsive promoters to induce gene expression on stress. Required for the Golgi apparatus localization of MNN1. Plays an essential role in maintaining water homeostasis, arsenite detoxification, copper-resistance, cold-resistance, hydrogen peroxide response, adaptation to citric acid stress, and repression of the mating pathway activity. Functions as an arsenic sensor and effector via direct binding to arsenic and subsequent phosphorylation of the ARR1 transcription factor. The chain is Mitogen-activated protein kinase HOG1 (HOG1) from Saccharomyces cerevisiae (strain ATCC 204508 / S288c) (Baker's yeast).